The chain runs to 846 residues: MKNRNRMIVNCVTASLMYYWSLPALAEQSSSEIKIVRDEYGMPHIYANDTWHLFYGYGYVVAQDRLFQMEMARRSTQGTVAEVLGKDFVKFDKDIRRNYWPDAIRAQIAALSPEDMSILQGYADGMNAWIDKVNTNPETLLPKQFNTFGFTPKRWEPFDVAMIFVGTMANRFSDSTSEIDNLALLTALKDKYGVSQGMAVFNQLKWLVNPSAPTTIAVQESNYPLKFNQQNSQTAALLPRYDLPAPMLDRPAKGADGALLALTAGKNRETIAAQFAQGGANGLAGYPTTSNMWVIGKSKAQDAKAIMVNGPQFGWYAPAYTYGIGLHGAGYDVTGNTPFAYPGLVFGHNGVISWGSTAGFGDDVDIFAERLSAEKPGYYLHNGKWVKMLSREETITVKNGQAETFTVWRTVHGNILQTDQTTQTAYAKSRAWDGKEVASLLAWTHQMKAKNWQEWTQQAAKQALTINWYYADVNGNIGYVHTGAYPDRQSGHDPRLPVPGTGKWDWKGLLPFEMNPKVYNPQSGYIANWNNSPQKDYPASDLFAFLWGGADRVTEIDRLLEQKPRLTADQAWDVIRQTSRQDLNLRLFLPTLQAATSGLTQSDPRRQLVETLTRWDGINLLNDDGKTWQQPGSAILNVWLTSMLKRTVVAAVPMPFDKWYSASGYETTQDGPTGSLNISVGAKILYEAVQGDKSPIPQAVDLFAGKPQQEVVLAALEDTWETLSKRYGNNVSNWKTPAMALTFRANNFFGVPQAAAEETRHQAEYQNRGTENDMIVFSPTTSDRPVLAWDVVAPGQSGFIAPDGTVDKHYEDQLKMYENFGRKSLWLTKQDVEAHKESQEVLHVQR.

Residues 1–26 form the signal peptide; it reads MKNRNRMIVNCVTASLMYYWSLPALA. Residue Glu-178 participates in Ca(2+) binding. Positions 236 to 289 are cleaved as a propeptide — spacer peptide; sequence ALLPRYDLPAPMLDRPAKGADGALLALTAGKNRETIAAQFAQGGANGLAGYPTT. The active-site Nucleophile is the Ser-290. Residues Asp-362, Val-364, Asp-365, Pro-494, and Asp-541 each contribute to the Ca(2+) site.

It belongs to the peptidase S45 family. As to quaternary structure, heterodimer of an alpha subunit and a beta subunit processed from the same precursor. The cofactor is Ca(2+).

The protein localises to the periplasm. The enzyme catalyses a penicillin + H2O = 6-aminopenicillanate + a carboxylate. This Escherichia coli protein is Penicillin G acylase (pac).